A 302-amino-acid polypeptide reads, in one-letter code: Acetaldehyde dehydrogenase 2 (302 aa).

Cys130 functions as the Acyl-thioester intermediate in the catalytic mechanism. Residues 161–169 (SVGPGTRRN) and Asn272 each bind NAD(+).

It belongs to the acetaldehyde dehydrogenase family.

The catalysed reaction is acetaldehyde + NAD(+) + CoA = acetyl-CoA + NADH + H(+). This chain is Acetaldehyde dehydrogenase 2, found in Cupriavidus necator (strain ATCC 17699 / DSM 428 / KCTC 22496 / NCIMB 10442 / H16 / Stanier 337) (Ralstonia eutropha).